The following is a 350-amino-acid chain: MQVSDFHFDLPDELIARYPQPERTASRLLQMDGNTGELIDGTFTDVLNQVQAGDLVVFNNTRVIPARMFGRKESGGKLEVLVERMLDEKSILAHVRCSKSPKPGTTIIVGENDEYSAEMVARHDALFELKFNSDKTVLDILEEIGHMPLPPYIDRPDEDADKERYQTVYNQKPGAVAAPTAGLHFDDVLLDKIKAKGAEFAYVTLHVGAGTFQPVKVDNINDHHMHAEYVEVPQEVVDAINATKARGGRIIAVGTTSVRSLESAAQDALKKGTELVPFFGDTEIFIYPGYEYQLVDCLITNFHLPESTLIMLVSAFAGYENTMNAYKHAVENKYRFFSYGDSMFIKKKTI.

It belongs to the QueA family. Monomer.

The protein localises to the cytoplasm. The catalysed reaction is 7-aminomethyl-7-carbaguanosine(34) in tRNA + S-adenosyl-L-methionine = epoxyqueuosine(34) in tRNA + adenine + L-methionine + 2 H(+). The protein operates within tRNA modification; tRNA-queuosine biosynthesis. Transfers and isomerizes the ribose moiety from AdoMet to the 7-aminomethyl group of 7-deazaguanine (preQ1-tRNA) to give epoxyqueuosine (oQ-tRNA). The protein is S-adenosylmethionine:tRNA ribosyltransferase-isomerase of Vibrio parahaemolyticus serotype O3:K6 (strain RIMD 2210633).